Consider the following 349-residue polypeptide: uncharacterized protein (349 aa).

An N-terminal signal peptide occupies residues 1–29; the sequence is MKQKYENYFKKRLILNLLIFLLLACSSES.

This is an uncharacterized protein from Borreliella burgdorferi (strain ATCC 35210 / DSM 4680 / CIP 102532 / B31) (Borrelia burgdorferi).